A 196-amino-acid chain; its full sequence is Holliday junction branch migration complex subunit RuvA (196 aa).

A domain I region spans residues Met1–His63. The segment at Thr64 to Thr142 is domain II. The flexible linker stretch occupies residues Ala143–Thr146. The domain III stretch occupies residues Ala147–Lys196.

This sequence belongs to the RuvA family. In terms of assembly, homotetramer. Forms an RuvA(8)-RuvB(12)-Holliday junction (HJ) complex. HJ DNA is sandwiched between 2 RuvA tetramers; dsDNA enters through RuvA and exits via RuvB. An RuvB hexamer assembles on each DNA strand where it exits the tetramer. Each RuvB hexamer is contacted by two RuvA subunits (via domain III) on 2 adjacent RuvB subunits; this complex drives branch migration. In the full resolvosome a probable DNA-RuvA(4)-RuvB(12)-RuvC(2) complex forms which resolves the HJ.

The protein localises to the cytoplasm. Functionally, the RuvA-RuvB-RuvC complex processes Holliday junction (HJ) DNA during genetic recombination and DNA repair, while the RuvA-RuvB complex plays an important role in the rescue of blocked DNA replication forks via replication fork reversal (RFR). RuvA specifically binds to HJ cruciform DNA, conferring on it an open structure. The RuvB hexamer acts as an ATP-dependent pump, pulling dsDNA into and through the RuvAB complex. HJ branch migration allows RuvC to scan DNA until it finds its consensus sequence, where it cleaves and resolves the cruciform DNA. The polypeptide is Holliday junction branch migration complex subunit RuvA (Streptococcus thermophilus (strain CNRZ 1066)).